The chain runs to 104 residues: Large ribosomal subunit protein bL21 (104 aa).

The protein belongs to the bacterial ribosomal protein bL21 family. In terms of assembly, part of the 50S ribosomal subunit. Contacts protein L20.

Functionally, this protein binds to 23S rRNA in the presence of protein L20. This is Large ribosomal subunit protein bL21 from Nitrosococcus oceani (strain ATCC 19707 / BCRC 17464 / JCM 30415 / NCIMB 11848 / C-107).